Consider the following 104-residue polypeptide: Nucleoid-associated protein DICTH_1981 (104 aa).

Positions 85–104 (KSAEKMGSLADGLPLPPGLF) are disordered.

Belongs to the YbaB/EbfC family. In terms of assembly, homodimer.

It is found in the cytoplasm. Its subcellular location is the nucleoid. Binds to DNA and alters its conformation. May be involved in regulation of gene expression, nucleoid organization and DNA protection. The sequence is that of Nucleoid-associated protein DICTH_1981 from Dictyoglomus thermophilum (strain ATCC 35947 / DSM 3960 / H-6-12).